Reading from the N-terminus, the 277-residue chain is Digeranylgeranylglyceryl phosphate synthase (277 aa).

7 helical membrane-spanning segments follow: residues 16 to 36 (ILAG…IPSI), 40 to 60 (GLVF…NDYF), 101 to 121 (FLGV…FIYA), 129 to 149 (FIGN…GALG), 153 to 173 (VGLA…REIM), 205 to 225 (IFGV…IGLG), and 257 to 277 (LKIA…TKGV).

This sequence belongs to the UbiA prenyltransferase family. DGGGP synthase subfamily. Requires Mg(2+) as cofactor.

The protein localises to the cell membrane. The enzyme catalyses sn-3-O-(geranylgeranyl)glycerol 1-phosphate + (2E,6E,10E)-geranylgeranyl diphosphate = 2,3-bis-O-(geranylgeranyl)-sn-glycerol 1-phosphate + diphosphate. It functions in the pathway membrane lipid metabolism; glycerophospholipid metabolism. Its function is as follows. Prenyltransferase that catalyzes the transfer of the geranylgeranyl moiety of geranylgeranyl diphosphate (GGPP) to the C2 hydroxyl of (S)-3-O-geranylgeranylglyceryl phosphate (GGGP). This reaction is the second ether-bond-formation step in the biosynthesis of archaeal membrane lipids. The chain is Digeranylgeranylglyceryl phosphate synthase from Pyrococcus abyssi (strain GE5 / Orsay).